The chain runs to 1391 residues: DNA-directed RNA polymerase subunit beta' (1391 aa).

Positions 70, 72, 85, and 88 each coordinate Zn(2+). Positions 461, 463, and 465 each coordinate Mg(2+). Zn(2+)-binding residues include cysteine 809, cysteine 882, cysteine 889, and cysteine 892.

Belongs to the RNA polymerase beta' chain family. In terms of assembly, the RNAP catalytic core consists of 2 alpha, 1 beta, 1 beta' and 1 omega subunit. When a sigma factor is associated with the core the holoenzyme is formed, which can initiate transcription. Mg(2+) serves as cofactor. Zn(2+) is required as a cofactor.

It carries out the reaction RNA(n) + a ribonucleoside 5'-triphosphate = RNA(n+1) + diphosphate. Its function is as follows. DNA-dependent RNA polymerase catalyzes the transcription of DNA into RNA using the four ribonucleoside triphosphates as substrates. This Zymomonas mobilis subsp. mobilis (strain ATCC 31821 / ZM4 / CP4) protein is DNA-directed RNA polymerase subunit beta'.